The sequence spans 390 residues: Scoulerine-9-O-methyltransferase 1 (390 aa).

Residue E153 participates in substrate binding. Residues M207, S211, G235, D258, 278–279, and K292 contribute to the S-adenosyl-L-methionine site; that span reads DM. H296 serves as the catalytic Proton acceptor. Substrate is bound at residue 296-297; that stretch reads HD.

The protein belongs to the class I-like SAM-binding methyltransferase superfamily. Cation-independent O-methyltransferase family. COMT subfamily. As to quaternary structure, homodimer. In terms of tissue distribution, highly expressed in capsules. Expressed is stems. Expressed at low levels in roots.

It carries out the reaction (S)-scoulerine + S-adenosyl-L-methionine = (S)-tetrahydrocolumbamine + S-adenosyl-L-homocysteine + H(+). The catalysed reaction is (S)-tetrahydrocolumbamine + S-adenosyl-L-methionine = (S)-tetrahydropalmatine + S-adenosyl-L-homocysteine + H(+). The enzyme catalyses (S)-norreticuline + S-adenosyl-L-methionine = (S)-norcodamine + S-adenosyl-L-homocysteine + H(+). It catalyses the reaction (S)-reticuline + S-adenosyl-L-methionine = (S)-codamine + S-adenosyl-L-homocysteine + H(+). The protein operates within alkaloid biosynthesis. Functionally, methyltransferase involved in the biosynthesis of the benzylisoquinoline alkaloid noscapine. Catalyzes the conversion of (S)-scoulerine to (S)-tetrahydrocolumbamine. Can convert (S)-tetrahydrocolumbamine to tetrahydropalmatine. Can convert (S)-norreticuline to (S)-norcodamine. Can convert (S)-reticuline to (S)-codamine. Substrate preference is (S)-scoulerine &gt; (S)-tetrahydrocolumbamine &gt; (S)-norreticuline &gt; (S)-reticuline. In Papaver somniferum (Opium poppy), this protein is Scoulerine-9-O-methyltransferase 1.